A 450-amino-acid polypeptide reads, in one-letter code: Chromosomal replication initiator protein DnaA (450 aa).

The domain I, interacts with DnaA modulators stretch occupies residues 1–84 (MTENEQIFWN…AVDYVYEEDL (84 aa)). The domain II stretch occupies residues 84-109 (LIIEQQHQGQQGYTEQAFQQLPAVQS). Residues 110 to 328 (DLNPKYSFDN…GALKDISLVA (219 aa)) are domain III, AAA+ region. ATP contacts are provided by Gly-154, Gly-156, Lys-157, and Thr-158. The domain IV, binds dsDNA stretch occupies residues 329 to 450 (NFKQIDTITV…EIETIKNKIK (122 aa)).

This sequence belongs to the DnaA family. In terms of assembly, oligomerizes as a right-handed, spiral filament on DNA at oriC.

It is found in the cytoplasm. Its function is as follows. Plays an essential role in the initiation and regulation of chromosomal replication. ATP-DnaA binds to the origin of replication (oriC) to initiate formation of the DNA replication initiation complex once per cell cycle. Binds the DnaA box (a 9 base pair repeat at the origin) and separates the double-stranded (ds)DNA. Forms a right-handed helical filament on oriC DNA; dsDNA binds to the exterior of the filament while single-stranded (ss)DNA is stabiized in the filament's interior. The ATP-DnaA-oriC complex binds and stabilizes one strand of the AT-rich DNA unwinding element (DUE), permitting loading of DNA polymerase. After initiation quickly degrades to an ADP-DnaA complex that is not apt for DNA replication. Binds acidic phospholipids. The sequence is that of Chromosomal replication initiator protein DnaA from Streptococcus equi subsp. zooepidemicus (strain MGCS10565).